The chain runs to 373 residues: Putative glutamate--cysteine ligase 2-2 (373 aa).

The protein belongs to the glutamate--cysteine ligase type 2 family. YbdK subfamily.

The enzyme catalyses L-cysteine + L-glutamate + ATP = gamma-L-glutamyl-L-cysteine + ADP + phosphate + H(+). Its function is as follows. ATP-dependent carboxylate-amine ligase which exhibits weak glutamate--cysteine ligase activity. The polypeptide is Putative glutamate--cysteine ligase 2-2 (Legionella pneumophila (strain Corby)).